We begin with the raw amino-acid sequence, 388 residues long: Pyruvate dehydrogenase E1 component subunit alpha, testis-specific form, mitochondrial (388 aa).

Residues 1 to 27 (MLAAFISRVLRRVAQKSARRVLVASRN) constitute a mitochondrion transit peptide. Pyruvate-binding residues include H90, Y116, R117, G163, V165, D194, G195, A196, N223, and Y225. Thiamine diphosphate contacts are provided by Y116, R117, G163, V165, D194, G195, A196, and N223. D194 is a binding site for Mg(2+). Mg(2+) contacts are provided by N223 and Y225. H290 is a binding site for thiamine diphosphate. S291 is subject to Phosphoserine; by PDK1, PDK2, PDK3 and PDK4. The residue at position 293 (S293) is a Phosphoserine. S298 carries the phosphoserine; by PDK3 modification.

In terms of assembly, heterotetramer of two PDHA2 and two PDHB subunits. The heterotetramer interacts with DLAT, and is part of the multimeric pyruvate dehydrogenase complex that contains multiple copies of pyruvate dehydrogenase (E1), dihydrolipoamide acetyltransferase (DLAT, E2) and lipoamide dehydrogenase (DLD, E3). These subunits are bound to an inner core composed of about 48 DLAT and 12 PDHX molecules. Thiamine diphosphate is required as a cofactor. The cofactor is Mg(2+). Post-translationally, phosphorylation at Ser-291, Ser-293 and Ser-298 by PDK family kinases inactivates the enzyme; for this phosphorylation at a single site is sufficient. Phosphorylation at Ser-293 interferes with access to active site, and thereby inactivates the enzyme. Dephosphorylation at all three sites, i.e. at Ser-291, Ser-293 and Ser-298, is required for reactivation. Testis. Expressed in postmeiotic spermatogenic cells.

It localises to the mitochondrion matrix. It catalyses the reaction N(6)-[(R)-lipoyl]-L-lysyl-[protein] + pyruvate + H(+) = N(6)-[(R)-S(8)-acetyldihydrolipoyl]-L-lysyl-[protein] + CO2. Its activity is regulated as follows. Pyruvate dehydrogenase activity is inhibited by phosphorylation of PDHA2; it is reactivated by dephosphorylation. The pyruvate dehydrogenase complex catalyzes the overall conversion of pyruvate to acetyl-CoA and CO(2), and thereby links the glycolytic pathway to the tricarboxylic cycle. In Homo sapiens (Human), this protein is Pyruvate dehydrogenase E1 component subunit alpha, testis-specific form, mitochondrial (PDHA2).